The sequence spans 216 residues: Cytidylate kinase (216 aa).

Gly-7–Thr-15 is an ATP binding site.

The protein belongs to the cytidylate kinase family. Type 1 subfamily.

The protein localises to the cytoplasm. The catalysed reaction is CMP + ATP = CDP + ADP. It catalyses the reaction dCMP + ATP = dCDP + ADP. The sequence is that of Cytidylate kinase from Chlamydia trachomatis serovar A (strain ATCC VR-571B / DSM 19440 / HAR-13).